Here is a 287-residue protein sequence, read N- to C-terminus: 2-dehydro-3-deoxyphosphooctonate aldolase (287 aa).

Belongs to the KdsA family.

The protein localises to the cytoplasm. It carries out the reaction D-arabinose 5-phosphate + phosphoenolpyruvate + H2O = 3-deoxy-alpha-D-manno-2-octulosonate-8-phosphate + phosphate. It functions in the pathway carbohydrate biosynthesis; 3-deoxy-D-manno-octulosonate biosynthesis; 3-deoxy-D-manno-octulosonate from D-ribulose 5-phosphate: step 2/3. The protein operates within bacterial outer membrane biogenesis; lipopolysaccharide biosynthesis. The polypeptide is 2-dehydro-3-deoxyphosphooctonate aldolase (Rhodopseudomonas palustris (strain BisB5)).